The chain runs to 437 residues: UDP-N-acetylmuramoylalanine--D-glutamate ligase (437 aa).

Residue 112-118 (GSNGKST) coordinates ATP.

Belongs to the MurCDEF family.

The protein resides in the cytoplasm. The enzyme catalyses UDP-N-acetyl-alpha-D-muramoyl-L-alanine + D-glutamate + ATP = UDP-N-acetyl-alpha-D-muramoyl-L-alanyl-D-glutamate + ADP + phosphate + H(+). It functions in the pathway cell wall biogenesis; peptidoglycan biosynthesis. Its function is as follows. Cell wall formation. Catalyzes the addition of glutamate to the nucleotide precursor UDP-N-acetylmuramoyl-L-alanine (UMA). This chain is UDP-N-acetylmuramoylalanine--D-glutamate ligase, found in Haemophilus influenzae (strain PittGG).